Consider the following 984-residue polypeptide: MLSNVGHSIQKMINNIPVAITANETSTAAVTSGGNVYQTGLIGGKIHYSFNEVITNENIVGKVIDVKATEDRLYLLNNSGSVFEYAYNAGSCSPVVREVYSPAACGGDKAVQIEAGRAHILIKTEAGKIWGAGSNAQYQLVPQGQVRYDTAVEIIVTDTNLHDNECPGSFTGVYNELECPVIPNCEKDKCDISCVKENLCDVHLGYINVSHLALNPPCETGTLSVPVYGDINYVGFLCVDNKGCATGSVTYTINHLYIKCGCLLGKFTHKDKCGCHVRELNLSSTCQVNIFQANPCPSANTDLCALTGSAPITGTTQISGKCGSCVIANVDIPIDFPLPSVSFEATCNTIVLEYNDCKTSITVLCDGTLCDYCECATTLDLDFDVPLKCEAPKPIKPQIELPQPCWAGIYAGYDISVLVDNCNRIYVYGSLHNIRSNKDLLKRSCLEELLKGTNASISFPADQLNCANHTARNDNCKCPKCRDKAFKTDLNKFGIHLSFPNSEDECSQKNMSVCDFLQNLKNCNDAQGCEPTCEPCDGYIYLNVAGDCGCPCGAPASAPIGSITLFNKKSICKLVSQNCPDISEVAIDVSTIVEFDLNKYCIDTRDIALDKVVKLQFCNDGPNVNVYIDIDKPGGIKFTSNGKKCNVEFTVSASTQNHQYILNFGSILDPVELTNLKYALSLDCYYPCPKYKNPFDTKITNTYIRGGDHIKFVVSNPKNIRQAVTADIPTVFRLNRRVIDVGVGYNNLTVLVGGLACPNEIYVIGSNCHGELGLGTNETIVSWRQLNRCIFDCQVNRVFSGRYVTFYITQSNNVYAAGQWKCFINSTTPQIVKSICPAWRISDMAITLNQIILLGADGCIFGLGDNHLGELGLCHTDCVTKPTPISFFYKLNNSAIKQFNDSLAHPMERNNRKCNRPFNPCEFGNFGGPCAPGPCGPFGPFGPSGPGPNQGPGDDYNNFKSTKYPRNGYNKYQPNNRIHSRNRY.

The segment at 941–984 is disordered; it reads FGPSGPGPNQGPGDDYNNFKSTKYPRNGYNKYQPNNRIHSRNRY.

The protein resides in the virion. This is an uncharacterized protein from Acanthamoeba polyphaga (Amoeba).